We begin with the raw amino-acid sequence, 890 residues long: UPF0182 protein SYNW1212 (890 aa).

8 helical membrane passes run Trp-21–Trp-41, Leu-64–Ile-84, Trp-98–Val-118, Ala-134–Leu-154, Phe-173–Asn-193, Arg-219–Ser-239, Leu-268–Leu-288, and Val-295–Leu-315.

It belongs to the UPF0182 family.

The protein localises to the cell membrane. This Parasynechococcus marenigrum (strain WH8102) protein is UPF0182 protein SYNW1212.